The sequence spans 98 residues: Large ribosomal subunit protein uL23 (98 aa).

The protein belongs to the universal ribosomal protein uL23 family. In terms of assembly, part of the 50S ribosomal subunit. Contacts protein L29, and trigger factor when it is bound to the ribosome.

Functionally, one of the early assembly proteins it binds 23S rRNA. One of the proteins that surrounds the polypeptide exit tunnel on the outside of the ribosome. Forms the main docking site for trigger factor binding to the ribosome. The protein is Large ribosomal subunit protein uL23 of Jannaschia sp. (strain CCS1).